A 96-amino-acid chain; its full sequence is SAGA-associated factor 11 (96 aa).

The segment at 68–89 (FHCKNCGRDVSANRFAAHLQRC) adopts an SGF11-type zinc-finger fold.

Belongs to the SGF11 family. Component of the 1.8 MDa SAGA transcription coactivator-HAT complex. SAGA is built of 5 distinct domains with specialized functions. Within the SAGA complex, SUS1, SGF11, SGF73 and UBP8 form an additional subcomplex of SAGA called the DUB module (deubiquitination module). Interacts directly with SGF73, SUS1 and UBP8.

It localises to the nucleus. Its function is as follows. Functions as a component of the transcription regulatory histone acetylation (HAT) complex SAGA. At the promoters, SAGA is required for recruitment of the basal transcription machinery. It influences RNA polymerase II transcriptional activity through different activities such as TBP interaction and promoter selectivity, interaction with transcription activators, and chromatin modification through histone acetylation and deubiquitination. SAGA acetylates nucleosomal histone H3 to some extent (to form H3K9ac, H3K14ac, H3K18ac and H3K23ac). SAGA interacts with DNA via upstream activating sequences (UASs). Involved in transcriptional regulation of a subset of SAGA-regulated genes. Within the SAGA complex, participates in a subcomplex, that specifically deubiquitinates histones H2B. This is SAGA-associated factor 11 from Vanderwaltozyma polyspora (strain ATCC 22028 / DSM 70294 / BCRC 21397 / CBS 2163 / NBRC 10782 / NRRL Y-8283 / UCD 57-17) (Kluyveromyces polysporus).